Here is a 283-residue protein sequence, read N- to C-terminus: DegV domain-containing protein lin2658 (283 aa).

The 278-residue stretch at 5–282 (IAVVTDSTTY…EGALGLTWSI (278 aa)) folds into the DegV domain. Hexadecanoate is bound by residues Ser-63 and Ser-96.

In terms of biological role, may bind long-chain fatty acids, such as palmitate, and may play a role in lipid transport or fatty acid metabolism. This chain is DegV domain-containing protein lin2658, found in Listeria innocua serovar 6a (strain ATCC BAA-680 / CLIP 11262).